The following is a 493-amino-acid chain: Sodium-coupled neutral amino acid symporter 2 (493 aa).

Residues 1–72 (MNNAEVLNVA…LPGTTSFGMS (72 aa)) are Cytoplasmic-facing. The tract at residues 1 to 92 (MNNAEVLNVA…SGILGLSYAM (92 aa)) is regulates protein turnover upon amino acid deprivation. Residues 73–92 (VFNLSNAIVGSGILGLSYAM) form a helical membrane-spanning segment. Position 78 (N78) interacts with Na(+). Residues 93–98 (ANTGIA) are Extracellular-facing. Residues 99–119 (LFMILLVFVTVFSLYSIHLLL) form a helical membrane-spanning segment. The Cytoplasmic portion of the chain corresponds to 120–154 (KTANEGGSLLYEQLGLKAFGIPGKLAASGSVTLQN). A helical membrane pass occupies residues 155 to 173 (IGAMSSYLYIVKYELPLVI). Over 174–184 (KALMDIKESNG) the chain is Extracellular. A helical transmembrane segment spans residues 185–205 (EWYLNGDYLVIMVSLAIILPL). At 206–213 (SLLRNLGY) the chain is on the cytoplasmic side. Residues 214-234 (LGYTSGFSPLCMVFFLIVVIY) traverse the membrane as a helical segment. The Extracellular segment spans residues 235–279 (KKFEIPCPLEAMNMTSNSSSHDHMAHNETDDEMCKPKYFVFNSQT). C241 and C268 are joined by a disulfide. N-linked (GlcNAc...) asparagine glycosylation is found at N247, N251, and N261. Residues 280–300 (VYAVPILTFSFVCHPAVLPIY) form a helical membrane-spanning segment. Residues 301 to 316 (QELKGRSRRRMMNVSN) lie on the Cytoplasmic side of the membrane. The helical transmembrane segment at 317-337 (VSFFAMFIMYLLAALFGYLTF) threads the bilayer. Over 338–358 (YSKVEPELLHTYSKVFGAGVI) the chain is Extracellular. A helical transmembrane segment spans residues 359 to 379 (FVVVRLAVLMAVTLTVPIVIF). T373 contacts Na(+). The Cytoplasmic segment spans residues 380–400 (PIRSSLNELFCSGKDFAWIRH). Residues 401-421 (ILITFLILAFTNVLVIFVPTI) form a helical membrane-spanning segment. At 422–423 (RD) the chain is on the extracellular side. The helical transmembrane segment at 424-444 (IFGFIGASAAAMLVFILPSAF) threads the bilayer. The Cytoplasmic portion of the chain corresponds to 445-459 (YIRLVKKESMKSVQK). The helical transmembrane segment at 460-482 (IGALLFLIGGIIVMIGSMTLIIL) threads the bilayer. The Extracellular portion of the chain corresponds to 483–493 (DWIHNSTSGGN).

The protein belongs to the amino acid/polyamine transporter 2 family.

The protein localises to the cell membrane. It catalyses the reaction L-alanine(in) + Na(+)(in) = L-alanine(out) + Na(+)(out). The enzyme catalyses glycine(in) + Na(+)(in) = glycine(out) + Na(+)(out). The catalysed reaction is L-serine(in) + Na(+)(in) = L-serine(out) + Na(+)(out). It carries out the reaction L-proline(in) + Na(+)(in) = L-proline(out) + Na(+)(out). It catalyses the reaction L-methionine(in) + Na(+)(in) = L-methionine(out) + Na(+)(out). The enzyme catalyses L-histidine(in) + Na(+)(in) = L-histidine(out) + Na(+)(out). The catalysed reaction is L-asparagine(in) + Na(+)(in) = L-asparagine(out) + Na(+)(out). It carries out the reaction L-glutamine(in) + Na(+)(in) = L-glutamine(out) + Na(+)(out). It catalyses the reaction L-threonine(in) + Na(+)(in) = L-threonine(out) + Na(+)(out). The enzyme catalyses L-leucine(in) + Na(+)(in) = L-leucine(out) + Na(+)(out). The catalysed reaction is L-phenylalanine(in) + Na(+)(in) = L-phenylalanine(out) + Na(+)(out). With respect to regulation, inhibited by N-methyl-D-glucamine. Inhibited by choline. Allosteric regulation of sodium ions binding by pH. In terms of biological role, symporter that cotransports neutral amino acids and sodium ions from the extracellular to the intracellular side of the cell membrane. The transport is pH-sensitive, Li(+)-intolerant, electrogenic, driven by the Na(+) electrochemical gradient and cotransports of neutral amino acids and sodium ions with a stoichiometry of 1:1. This chain is Sodium-coupled neutral amino acid symporter 2, found in Xenopus tropicalis (Western clawed frog).